We begin with the raw amino-acid sequence, 212 residues long: Thiamine-phosphate synthase (212 aa).

4-amino-2-methyl-5-(diphosphooxymethyl)pyrimidine-binding positions include 35–39 (QLRDK) and Asn67. 2 residues coordinate Mg(2+): Asp68 and Asp87. Ser106 is a 4-amino-2-methyl-5-(diphosphooxymethyl)pyrimidine binding site. 132–134 (TGS) is a binding site for 2-[(2R,5Z)-2-carboxy-4-methylthiazol-5(2H)-ylidene]ethyl phosphate. Residue Lys135 coordinates 4-amino-2-methyl-5-(diphosphooxymethyl)pyrimidine. 2-[(2R,5Z)-2-carboxy-4-methylthiazol-5(2H)-ylidene]ethyl phosphate-binding positions include Gly163 and 183 to 184 (IS).

It belongs to the thiamine-phosphate synthase family. Mg(2+) serves as cofactor.

The catalysed reaction is 2-[(2R,5Z)-2-carboxy-4-methylthiazol-5(2H)-ylidene]ethyl phosphate + 4-amino-2-methyl-5-(diphosphooxymethyl)pyrimidine + 2 H(+) = thiamine phosphate + CO2 + diphosphate. It carries out the reaction 2-(2-carboxy-4-methylthiazol-5-yl)ethyl phosphate + 4-amino-2-methyl-5-(diphosphooxymethyl)pyrimidine + 2 H(+) = thiamine phosphate + CO2 + diphosphate. The enzyme catalyses 4-methyl-5-(2-phosphooxyethyl)-thiazole + 4-amino-2-methyl-5-(diphosphooxymethyl)pyrimidine + H(+) = thiamine phosphate + diphosphate. It participates in cofactor biosynthesis; thiamine diphosphate biosynthesis; thiamine phosphate from 4-amino-2-methyl-5-diphosphomethylpyrimidine and 4-methyl-5-(2-phosphoethyl)-thiazole: step 1/1. In terms of biological role, condenses 4-methyl-5-(beta-hydroxyethyl)thiazole monophosphate (THZ-P) and 2-methyl-4-amino-5-hydroxymethyl pyrimidine pyrophosphate (HMP-PP) to form thiamine monophosphate (TMP). In Methanocella arvoryzae (strain DSM 22066 / NBRC 105507 / MRE50), this protein is Thiamine-phosphate synthase.